A 460-amino-acid polypeptide reads, in one-letter code: Hemopexin (460 aa).

The N-terminal stretch at 1-23 (MARTVVALNILVLLGLCWSLAVA) is a signal peptide. Asparagine 38 and asparagine 64 each carry an N-linked (GlcNAc...) asparagine glycan. Disulfide bonds link cysteine 50–cysteine 230, cysteine 148–cysteine 153, and cysteine 187–cysteine 199. 4 Hemopexin repeats span residues 53–93 (AWSF…WKNP), 94–138 (VTSV…FPGI), 139–183 (PYPP…SWPA), and 184–230 (VGNC…FISC). Histidine 79 serves as a coordination point for heme. Histidine 149 provides a ligand contact to heme. Asparagine 186 carries N-linked (GlcNAc...) asparagine glycosylation. Histidine 235 is a binding site for heme. N-linked (GlcNAc...) asparagine glycans are attached at residues asparagine 240 and asparagine 246. Intrachain disulfides connect cysteine 255–cysteine 458, cysteine 364–cysteine 406, and cysteine 416–cysteine 433. 4 Hemopexin repeats span residues 257-302 (ADPG…WPQG), 303-350 (PSAV…LGSP), 355-394 (LDTI…WAEL), and 398-448 (HEKV…SLPQ). Heme is bound at residue histidine 291.

This sequence belongs to the hemopexin family. Expressed by the liver and secreted in plasma.

The protein resides in the secreted. Binds heme and transports it to the liver for breakdown and iron recovery, after which the free hemopexin returns to the circulation. The chain is Hemopexin (Hpx) from Rattus norvegicus (Rat).